The sequence spans 236 residues: Small ribosomal subunit protein uS2c (236 aa).

The protein belongs to the universal ribosomal protein uS2 family.

The protein localises to the plastid. Its subcellular location is the chloroplast. This Piper cenocladum (Ant piper) protein is Small ribosomal subunit protein uS2c (rps2).